Reading from the N-terminus, the 423-residue chain is Lysosomal acid phosphatase (423 aa).

The first 30 residues, 1-30, serve as a signal peptide directing secretion; the sequence is MAGRRFGWSRAALLQLILGVNLMVMPRTQA. Residues 31-380 are Lumenal-facing; it reads RTLRFVTLLY…QLAGGPADTE (350 aa). The Nucleophile role is filled by H42. N-linked (GlcNAc...) asparagine glycosylation is found at N92, N133, N167, N177, N191, and N267. Cystine bridges form between C159–C370, C212–C310, and C345–C349. The active-site Proton donor is the D287. N-linked (GlcNAc...) asparagine glycans are attached at residues N322 and N331. A helical membrane pass occupies residues 381-401; sequence VIVALAVCGSILFLLIVLLLT. The Cytoplasmic segment spans residues 402-423; sequence VLFRVQAQPPGYRHVPDGEDHA.

It belongs to the histidine acid phosphatase family. Post-translationally, the membrane-bound form is converted to the soluble form by sequential proteolytic processing. First, the C-terminal cytoplasmic tail is removed. Cleavage by a lysosomal protease releases the soluble form in the lysosome lumen.

It localises to the lysosome membrane. It is found in the lysosome lumen. The catalysed reaction is a phosphate monoester + H2O = an alcohol + phosphate. In Bos taurus (Bovine), this protein is Lysosomal acid phosphatase (ACP2).